The following is a 106-amino-acid chain: MTSATQFDNVSVVKRANVYFDGKCVSHTVLFPDGTRKTLGVILPCALNFGTDAPELMEVQAGKCRVKLDGSSEWQTYGAGESFSVPGKSRFDIEVLETLDYVCSYL.

Belongs to the nucleoside phosphorylase PpnP family.

It catalyses the reaction a purine D-ribonucleoside + phosphate = a purine nucleobase + alpha-D-ribose 1-phosphate. The enzyme catalyses adenosine + phosphate = alpha-D-ribose 1-phosphate + adenine. It carries out the reaction cytidine + phosphate = cytosine + alpha-D-ribose 1-phosphate. The catalysed reaction is guanosine + phosphate = alpha-D-ribose 1-phosphate + guanine. It catalyses the reaction inosine + phosphate = alpha-D-ribose 1-phosphate + hypoxanthine. The enzyme catalyses thymidine + phosphate = 2-deoxy-alpha-D-ribose 1-phosphate + thymine. It carries out the reaction uridine + phosphate = alpha-D-ribose 1-phosphate + uracil. The catalysed reaction is xanthosine + phosphate = alpha-D-ribose 1-phosphate + xanthine. Catalyzes the phosphorolysis of diverse nucleosides, yielding D-ribose 1-phosphate and the respective free bases. Can use uridine, adenosine, guanosine, cytidine, thymidine, inosine and xanthosine as substrates. Also catalyzes the reverse reactions. The chain is Pyrimidine/purine nucleoside phosphorylase from Burkholderia cenocepacia (strain ATCC BAA-245 / DSM 16553 / LMG 16656 / NCTC 13227 / J2315 / CF5610) (Burkholderia cepacia (strain J2315)).